Reading from the N-terminus, the 915-residue chain is WD repeat-containing protein 44 (915 aa).

A compositionally biased stretch (acidic residues) spans 1 to 14; the sequence is MASESDTEEFYDAP. The disordered stretch occupies residues 1–24; sequence MASESDTEEFYDAPEDVHLGTGYP. Ala-2 bears the N-acetylalanine mark. The segment at 2-173 is binding activity; that stretch reads ASESDTEEFY…SSGEQLDASG (172 aa). Residue Ser-3 is modified to Phosphoserine. Residues 9 to 15 carry the FFAT-like motif motif; the sequence is EFYDAPE. The residue at position 11 (Tyr-11) is a Phosphotyrosine. A phosphoserine mark is found at Ser-27, Ser-50, Ser-66, Ser-71, Ser-81, and Ser-126. Disordered regions lie at residues 79–102, 117–174, and 208–282; these read DDSL…VAGT, LQQD…ASGL, and VEEV…PKEN. Residues 114 to 139 adopt a coiled-coil conformation; that stretch reads EHELQQDSEKAESQNVAEESELETQK. Positions 146–155 are enriched in basic and acidic residues; that stretch reads TCEKSEKTVD. A phosphothreonine mark is found at Thr-161 and Thr-221. The segment at 213-259 is important for interaction with ARHGAP26 AND ARHGAP10; that stretch reads PAKPPRHLTPEPDIVASTKKPVPARPPPPTNFPPPRPPPPSRPAPPP. The segment covering 235-258 has biased composition (pro residues); sequence PARPPPPTNFPPPRPPPPSRPAPP. Ser-264 is subject to Phosphoserine. Basic and acidic residues predominate over residues 264–280; sequence SELEFEALKTPDLDVPK. A Phosphothreonine modification is found at Thr-273. Residues 336-349 form an important for interaction with RAB11A region; the sequence is VMGPQRPRSNSGRE. Phosphoserine is present on residues Ser-344 and Ser-346. Phosphothreonine occurs at positions 351 and 403. Disordered stretches follow at residues 399–425 and 461–481; these read SNDA…RLKQ and DEVF…GMPY. Phosphoserine is present on residues Ser-405, Ser-472, Ser-473, and Ser-474. The span at 469–478 shows a compositional bias: acidic residues; that stretch reads DDPSSSDDEG. Tyr-481 bears the Phosphotyrosine mark. The stretch at 511–550 is one WD 1 repeat; the sequence is EHMGAVWTMKFSHCGRLLASAGQDNIVRIWALKNAFDYFN. A disordered region spans residues 559–593; that stretch reads EGRVSPSPSQESLSSSKSDTDMGVCSGTDEDPDDK. Ser-563 and Ser-567 each carry phosphoserine. Positions 563–575 are enriched in low complexity; that stretch reads SPSPSQESLSSSK. WD repeat units lie at residues 607-645, 647-687, 692-731, 742-781, 786-825, 840-880, and 882-915; these read GHTA…CLCC, QHID…VALW, GQTK…YHTQ, KVGR…LSMK, VNSS…SKFT, AHNA…EVLD, and TSTG…KTVS.

In terms of assembly, interacts with the GTP-bound form of RAB11 when membrane-associated. Interacts with GRAF1/ARHGAP26 or GRAF2/ARHGAP10; the interaction connects the endoplasmic reticulum (ER) with the endosomal tubule. Interacts (via FFAT-like motif) with VAPA (via MSP domain) or VAPB (via MSP domain); the interaction connects the ER with the endosomal tubule. Does not bind to other Rab and Rho small G proteins. Post-translationally, phosphorylated by ATK1; the phosphorylation stabilizes its interaction with RAB11A and RAB11B.

It localises to the cytoplasm. It is found in the cytosol. Its subcellular location is the perinuclear region. The protein resides in the endosome membrane. The protein localises to the golgi apparatus. It localises to the trans-Golgi network. In terms of biological role, downstream effector for Rab11 which regulates Rab11 intracellular membrane trafficking functions such as endocytic recycling, intracellular ciliogenesis and protein export. ATK1-mediated phosphorylation of WDR44 induces binding to Rab11 which activates endocytic recycling of transferrin receptor back to the plasma membrane. When bound to Rab11, prevents the formation of the ciliogenic Rab11-Rabin8/RAB3IP-RAB11FIP3 complex, therefore inhibiting preciliary trafficking and ciliogenesis. Participates in neo-synthesized protein export by connecting the endoplasmic reticulum (ER) with the endosomal tubule via direct interactions with the integral ER proteins VAPA or VAPB and the endosomal protein GRAFs (GRAF1/ARHGAP26 or GRAF2/ARHGAP10), which facilitates the transfer of proteins such as E-cadherin, MPP14 and CFTR into a Rab8-Rab10-Rab11-dependent export route. This Mus musculus (Mouse) protein is WD repeat-containing protein 44.